A 401-amino-acid chain; its full sequence is Calreticulin (401 aa).

The N-terminal stretch at 1–18 (MRKELWLGLLLSSQAVLS) is a signal peptide. An intrachain disulfide couples Cys103 to Cys134. 4 residues coordinate an alpha-D-glucoside: Tyr107, Lys109, Tyr125, and Asp132. A run of 7 repeats spans residues 187 to 198 (KESGTLEEDWEI), 206 to 217 (DPEDKKPADWVD), 223 to 234 (DPEDKKPEDWDK), 241 to 252 (DPDATQPDDWDE), 256 to 266 (GKWEAPMISNP), 270 to 280 (GEWKAKKIPNP), and 284 to 294 (GVWKPRDIPNP). Positions 187–252 (KESGTLEEDW…DATQPDDWDE (66 aa)) are 4 X approximate repeats. Composition is skewed to basic and acidic residues over residues 199–214 (LKPK…KPAD) and 224–236 (PEDK…DKEP). The segment at 199–263 (LKPKTIPDPE…EDGKWEAPMI (65 aa)) is disordered. Positions 246–256 (QPDDWDEEEDG) are enriched in acidic residues. Residues 256–294 (GKWEAPMISNPKYKGEWKAKKIPNPAYKGVWKPRDIPNP) form a 3 X approximate repeats region. Residue Asp314 coordinates an alpha-D-glucoside. The segment at 341–401 (DQTNGATKDA…EEEDDKKDEL (61 aa)) is disordered. Positions 348–381 (KDAEKKAFDSAEADKRKKEEDERKKQEEEEKKTA) are enriched in basic and acidic residues. The span at 382–401 (EEDEDDDDEEEEEDDKKDEL) shows a compositional bias: acidic residues. Residues 398–401 (KDEL) carry the Prevents secretion from ER motif.

This sequence belongs to the calreticulin family.

Its subcellular location is the endoplasmic reticulum lumen. Molecular calcium-binding chaperone promoting folding, oligomeric assembly and quality control in the ER via the calreticulin/calnexin cycle. This lectin may interact transiently with almost all of the monoglucosylated glycoproteins that are synthesized in the ER. This chain is Calreticulin, found in Euglena gracilis.